The chain runs to 60 residues: Metallothionein A (60 aa).

The segment at 1–28 (MDPCECSKSGNCNCGGSCTCTNCSCKSC) is beta. A divalent metal cation is bound by residues Cys4, Cys6, Cys12, Cys14, Cys18, Cys20, Cys23, Cys25, Cys28, Cys32, Cys33, Cys35, Cys36, Cys40, Cys43, Cys47, Cys49, Cys54, Cys58, and Cys59. Residues 29–60 (KKSCCPCCPSGCTKCASGCVCIGKTCDTSCCQ) are alpha.

The protein belongs to the metallothionein superfamily. Type 1 family.

Metallothioneins have a high content of cysteine residues that bind various heavy metals. This chain is Metallothionein A (mta), found in Chaenocephalus aceratus (Blackfin icefish).